The following is a 646-amino-acid chain: Esterase EstA (646 aa).

An N-terminal signal peptide occupies residues methionine 1–alanine 24. Topologically, residues alanine 25–glycine 397 are extracellular. The Nucleophile role is filled by serine 38. Active-site residues include aspartate 310 and histidine 313. An Autotransporter domain is found at glutamine 366–phenylalanine 646. A beta stranded transmembrane segment spans residues tyrosine 398–isoleucine 408. Residues aspartate 409–glutamate 410 lie on the Periplasmic side of the membrane. A beta stranded transmembrane segment spans residues alanine 411–tyrosine 421. The Extracellular segment spans residues arginine 422–asparagine 437. A beta stranded transmembrane segment spans residues serine 438 to tyrosine 447. Topologically, residues glutamine 448–arginine 451 are periplasmic. Residues tryptophan 452–glycine 461 form a beta stranded membrane-spanning segment. Residues tyrosine 462–histidine 488 lie on the Extracellular side of the membrane. A beta stranded membrane pass occupies residues leucine 489–isoleucine 500. The Periplasmic segment spans residues alanine 501–proline 507. The chain crosses the membrane as a beta stranded span at residues tryptophan 508–tyrosine 518. Over alanine 519–arginine 547 the chain is Extracellular. A beta stranded transmembrane segment spans residues leucine 548 to phenylalanine 558. Over glycine 559–aspartate 561 the chain is Periplasmic. Residues threonine 562–glutamate 571 traverse the membrane as a beta stranded segment. The Extracellular portion of the chain corresponds to arginine 572–asparagine 605. Residues arginine 606–leucine 615 traverse the membrane as a beta stranded segment. Residues alanine 616 to glutamate 618 lie on the Periplasmic side of the membrane. Residues leucine 619–arginine 628 form a beta stranded membrane-spanning segment. The Extracellular segment spans residues lysine 629 to glutamine 636. A beta stranded transmembrane segment spans residues serine 637–phenylalanine 646.

Belongs to the 'GDSL' lipolytic enzyme family.

It localises to the cell outer membrane. It catalyses the reaction a carboxylic ester + H2O = an alcohol + a carboxylate + H(+). Esterase whose enzymatic activity is required for rhamnolipid production, all kinds of cell motility (swimming, swarming, and twitching), and biofilm formation; the exact role of EstA in these processes is unclear. In vitro, has pronounced esterase activities towards p-nitrophenyl esters of short acyl chain length (C4-C6) and Tween detergents. Also shows relatively high activity towards beta-naphthyl butyrate, whereas its activities towards triacylglycerols and acyls-CoA are negligible. The polypeptide is Esterase EstA (estA) (Pseudomonas aeruginosa (strain ATCC 15692 / DSM 22644 / CIP 104116 / JCM 14847 / LMG 12228 / 1C / PRS 101 / PAO1)).